A 276-amino-acid chain; its full sequence is Undecaprenyl-diphosphatase (276 aa).

7 helical membrane-spanning segments follow: residues 12 to 34 (LGIV…IVVG), 43 to 63 (TATA…MWEF), 85 to 105 (FNLL…ADLI), 108 to 128 (WLFN…IMLW), 185 to 205 (TEFS…YSLF), 218 to 238 (IFAI…RALL), and 249 to 269 (FAWY…LHLI).

Belongs to the UppP family.

The protein localises to the cell inner membrane. It carries out the reaction di-trans,octa-cis-undecaprenyl diphosphate + H2O = di-trans,octa-cis-undecaprenyl phosphate + phosphate + H(+). Catalyzes the dephosphorylation of undecaprenyl diphosphate (UPP). Confers resistance to bacitracin. In Ectopseudomonas mendocina (strain ymp) (Pseudomonas mendocina), this protein is Undecaprenyl-diphosphatase.